Here is a 79-residue protein sequence, read N- to C-terminus: Defensin-like protein 272 (79 aa).

Residues methionine 1 to serine 24 form the signal peptide. Disulfide bonds link cysteine 34–cysteine 77, cysteine 43–cysteine 63, cysteine 49–cysteine 75, and cysteine 53–cysteine 76.

Belongs to the DEFL family.

It localises to the secreted. In Arabidopsis thaliana (Mouse-ear cress), this protein is Defensin-like protein 272.